Here is a 237-residue protein sequence, read N- to C-terminus: UPF0174 protein YaaW (237 aa).

Belongs to the UPF0174 family.

The chain is UPF0174 protein YaaW (yaaW) from Escherichia coli (strain K12).